Reading from the N-terminus, the 444-residue chain is MSTGTSASYKRDNAFYALDKVERILLDGYSLCDACTGRLFGLRGYGLSNTERGRALKTLLIMKAFQASPRQADLELLRVLARTGFEPARELLKKLSGEDVEVKACSICEGLTGRYYELALRAVEEAKSYEFNTFEVGVRIDAEVIRREEELWRRYGLESAESIRNEASREVGKIISKLTGKEYSRNNSELLIIVDLSAGAIELHPAPVFVYGRYRKYARGLPQNPWPQPDERIKFNTSIEELIVKPALELFEAEKAKFHAAGREDIDVRTLGTGRPFVLEIKKPRKRNIDLKVLAEKINSGAGGLIEVLDLAYTDRKTIKKLKSLASIAKKAYVARVKFEKPVDDEKLAEISKVFSNAVINQRTPTRVLHRRVDKLRKKIVYRLEARKISQDEVEFYLETQGGFYVKEFIHGDNGRTTPSIAEFLGNNVLSIELDVVSIEETAA.

Asp-265 acts as the Nucleophile in catalysis. Residues Tyr-333 and Tyr-405 each contribute to the substrate site.

Belongs to the pseudouridine synthase Pus10 family.

The enzyme catalyses uridine(54) in tRNA = pseudouridine(54) in tRNA. The catalysed reaction is uridine(55) in tRNA = pseudouridine(55) in tRNA. Its function is as follows. Responsible for synthesis of pseudouridine from uracil-54 and uracil-55 in the psi GC loop of transfer RNAs. This Thermofilum pendens (strain DSM 2475 / Hrk 5) protein is tRNA pseudouridine synthase Pus10.